The chain runs to 506 residues: Sucrose transport protein SUT3 (506 aa).

Residues 1–20 (MAVDMELDGGGDGKGKAPPQ) lie on the Cytoplasmic side of the membrane. A helical membrane pass occupies residues 21–41 (ISLSGLFLACMVAGGVQYGWA). The Extracellular portion of the chain corresponds to 42-54 (LQLSLLTPYIQTL). The chain crosses the membrane as a helical span at residues 55–75 (GIPHALTSVMWLCGPIAGLIV). The Cytoplasmic segment spans residues 76–94 (QPCVGLYSDKCTSSLGRRR). Residues 95–115 (PFILTGCIIICISVIVIGFSS) form a helical membrane-spanning segment. Over 116–135 (DIGYALGDATEDCKVYRGPR) the chain is Extracellular. The helical transmembrane segment at 136–156 (YHAAAAFILGFWLLDFSNNTV) threads the bilayer. Residues 157 to 171 (QGPARALMADLSGRH) lie on the Cytoplasmic side of the membrane. A helical membrane pass occupies residues 172-192 (GPSAANAIFCSWMALGNILGY). At 193 to 220 (SSGSTNDWHKWFPFLMTRACCEACANLK) the chain is on the extracellular side. Residues 221–241 (AAFLVAVVFLGLSTAVTMVFA) traverse the membrane as a helical segment. Topologically, residues 242–275 (REVALDPVAAAKRNEGEASGPLAVFKGMKNLPVG) are cytoplasmic. Residues 276 to 296 (MPSVLIVTGLTWLSWFPFILF) traverse the membrane as a helical segment. Over 297 to 327 (DTDWMGREIYHGRPDGSPAEVTAFQEGVRQG) the chain is Extracellular. Residues 328–348 (AFGLLLNSIVLGISSFLIEPM) form a helical membrane-spanning segment. Residues 349–355 (CRRLGAR) lie on the Cytoplasmic side of the membrane. A helical transmembrane segment spans residues 356–376 (AVWVMSSAVVCVAMAAVSVLS). Residues 377–404 (AWSLGDFGGSVQDAARAPAEEGGVRASA) lie on the Extracellular side of the membrane. The helical transmembrane segment at 405-425 (LALFVFLGLPFAVLCSVPFAV) threads the bilayer. Over 426–441 (TAQLTASRGGGQGLCT) the chain is Cytoplasmic. A helical transmembrane segment spans residues 442–462 (GVLNISIVVPQMAIALGAGPW). The Extracellular segment spans residues 463–470 (DELFGEGN). The chain crosses the membrane as a helical span at residues 471 to 491 (IPAFAMASVFAAAAAAAGVVL). At 492–506 (LPKVSVRSVSMAGGH) the chain is on the cytoplasmic side.

This sequence belongs to the glycoside-pentoside-hexuronide (GPH) cation symporter transporter (TC 2.A.2.4) family. As to quaternary structure, homodimer.

It is found in the cell membrane. The protein operates within glycan biosynthesis; sucrose metabolism. In terms of biological role, responsible for the transport of sucrose into the cell, with the concomitant uptake of protons (symport system). May also transport other glucosides. This Oryza sativa subsp. indica (Rice) protein is Sucrose transport protein SUT3 (SUT3).